The following is a 334-amino-acid chain: Chitin synthase export chaperone (334 aa).

The next 7 membrane-spanning stretches (helical) occupy residues Ile49 to Met69, Ile85 to Gly105, Gly123 to Tyr143, Leu159 to Leu179, Val185 to Met205, Leu220 to Phe240, and Ile244 to Leu264.

The protein belongs to the CHS7 family.

The protein resides in the endoplasmic reticulum membrane. Its function is as follows. Chaperone required for the export of the chitin synthase chs3 from the endoplasmic reticulum. Plays a critical role in cell wall integrity and virulence. In Fusarium oxysporum f. sp. lycopersici (strain 4287 / CBS 123668 / FGSC 9935 / NRRL 34936) (Fusarium vascular wilt of tomato), this protein is Chitin synthase export chaperone.